We begin with the raw amino-acid sequence, 344 residues long: HTH-type transcriptional repressor MelR (344 aa).

In terms of domain architecture, HTH lacI-type spans 2–58 (VRIKDIALKAKVSSATVSRILNEDESLSVAGETRQRVINIAEELGYQTVAKRRKSRG). Positions 4–23 (IKDIALKAKVSSATVSRILN) form a DNA-binding region, H-T-H motif.

It is found in the cytoplasm. Functionally, represses the melibiose operon melREDCA in the absence of melibiose or raffinose. Binds to two binding sites at the promoter region of the operon. This is HTH-type transcriptional repressor MelR from Bacillus subtilis (strain 168).